A 599-amino-acid chain; its full sequence is Tryptophan 2-C-methyltransferase (599 aa).

The 146-residue stretch at 4–149 (KGTVALINPN…RALAEGRSAD (146 aa)) folds into the B12-binding domain. The tract at residues 167 to 197 (RVAPPALDPRAAPAPSSSPSPSPAPSSSSAP) is disordered. Residues 168 to 181 (VAPPALDPRAAPAP) are compositionally biased toward low complexity. The Radical SAM core domain occupies 239 to 492 (YREGGLGSIL…IEYERQFMFD (254 aa)). Residues cysteine 253, cysteine 257, and cysteine 260 each contribute to the [4Fe-4S] cluster site.

Requires [4Fe-4S] cluster as cofactor. Cob(II)alamin is required as a cofactor.

The catalysed reaction is L-tryptophan + S-adenosyl-L-methionine = 2-methyl-L-tryptophan + S-adenosyl-L-homocysteine + H(+). Functionally, involved in the biosynthetic pathway of the antibiotic thiostrepton A. First, TsrM catalyzes the transfer of a methyl group from S-adenosyl methionine (SAM) to cobalamin, leading to the formation of methylcobalamin (CH3-cobalamin) and S-adenosyl-L-homocysteine (SAH). Then the methyl group is transferred to the C2 position of tryptophan (Trp) with the concerted action of the radical SAM [4Fe-4S] center, leading to the production of methyltryptophan. The chain is Tryptophan 2-C-methyltransferase from Streptomyces laurentii.